A 146-amino-acid chain; its full sequence is Transcriptional regulator MraZ (146 aa).

SpoVT-AbrB domains follow at residues 7–54 and 83–126; these read HVTN…GPEL and GVYV…DPQA.

Belongs to the MraZ family. Forms oligomers.

It localises to the cytoplasm. Its subcellular location is the nucleoid. The protein is Transcriptional regulator MraZ of Rhizobium meliloti (strain 1021) (Ensifer meliloti).